The chain runs to 88 residues: Small ribosomal subunit protein bS20 (88 aa).

The protein belongs to the bacterial ribosomal protein bS20 family.

Functionally, binds directly to 16S ribosomal RNA. This Clostridium novyi (strain NT) protein is Small ribosomal subunit protein bS20.